We begin with the raw amino-acid sequence, 432 residues long: Isocitrate lyase (432 aa).

Residues 1-24 (MSNVGKPRTAQEIQQDWDTNPRWN) are disordered. The span at 11–22 (QEIQQDWDTNPR) shows a compositional bias: polar residues. 93–95 (SGW) contacts substrate. Aspartate 155 provides a ligand contact to Mg(2+). The Proton acceptor role is filled by cysteine 193. Substrate-binding positions include 194–195 (GH), arginine 230, 315–319 (NCSPS), and threonine 349.

This sequence belongs to the isocitrate lyase/PEP mutase superfamily. Isocitrate lyase family. In terms of assembly, homotetramer. Mg(2+) is required as a cofactor.

The catalysed reaction is D-threo-isocitrate = glyoxylate + succinate. The protein operates within carbohydrate metabolism; glyoxylate cycle; (S)-malate from isocitrate: step 1/2. Inhibited by 3-phosphoglycerate, 6-phosphogluconate, phosphoenolpyruvate (PEP), fructose 1,6-bisphosphate, glycolate, oxalate, and itaconate. Involved in the metabolic adaptation in response to environmental changes. Catalyzes the reversible formation of succinate and glyoxylate from isocitrate, a key step of the glyoxylate cycle, which operates as an anaplerotic route for replenishing the tricarboxylic acid cycle during growth on fatty acid substrates. The protein is Isocitrate lyase of Corynebacterium glutamicum (strain ATCC 13032 / DSM 20300 / JCM 1318 / BCRC 11384 / CCUG 27702 / LMG 3730 / NBRC 12168 / NCIMB 10025 / NRRL B-2784 / 534).